A 440-amino-acid chain; its full sequence is FAD-dependent monooxygenase FVEG_08293 (440 aa).

The helical transmembrane segment at 7-26 (EFNVAIVGAGVAGLALAMAL) threads the bilayer. 2 residues coordinate FAD: Glu37 and Gly50. An N-linked (GlcNAc...) asparagine glycan is attached at Asn77. An FAD-binding site is contributed by Arg122. Catalysis depends on residues Arg203 and Tyr235. 2 residues coordinate FAD: Asp317 and Ala330.

This sequence belongs to the paxM FAD-dependent monooxygenase family. The cofactor is FAD.

The protein localises to the membrane. Functionally, FAD-dependent monooxygenase; part of the Fusarium detoxification of benzoxazolinone cluster 1 (FDB1) involved in the degradation of benzoxazolinones produced by the host plant. Maize, wheat, and rye produce the 2 benzoxazinone phytoanticipins 2,4-dihy-droxy-7-methoxy-1,4-benzoxazin-3-one (DIMBOA) and 2,4-dihydroxy-1,4-benzoxazin-3-one (DIBOA) that, due to their inherent instability once released, spontaneously degrade to the more stable corresponding benzoxazolinones, 6-methoxy-2-benzoxazolinone (MBOA) and 2-benzoxazolinone (BOA), respectively. The first step in the detoxification of benzoxazolinones involves the hydrolysis of the cyclic ester bond of benzoxazolinones by the FDB1 cluster gamma-lactamase MBL1 to aminophenols. MBL1 is able to convert BOA into 2-aminophenol (2-AP), as well as MBOA into 5-methoxy-2-aminophenol (2-AMP). The FDB2 cluster N-malonyltransferase FDB2/NAT1 then metabolizes aminophenols via N-malonylation to non-toxic malonamic acids. FDB2/NAT1 converts 2-AP into N-(2-hydroxyphenyl) malonamic acid (HPMA) and 2-AMP into N-(2-hydroxy-4-methoxyphenyl) malonamic acid (HMPMA). The duplicated dienlactone hydrolases DLH1 and DLH2 may provide redundant function for hydrolyzing the lactone moiety in the BOA molecule. The roles of the amidases an other enzymes encoded by the 2 FDB clusters have not been identified so far. The protein is FAD-dependent monooxygenase FVEG_08293 of Gibberella moniliformis (strain M3125 / FGSC 7600) (Maize ear and stalk rot fungus).